A 176-amino-acid chain; its full sequence is Ribosome rescue factor SmrB (176 aa).

Residues 93–168 (LDLHGYRQSE…GDAALLVLID (76 aa)) form the Smr domain.

Belongs to the SmrB family. As to quaternary structure, associates with collided ribosomes, but not with correctly translating polysomes.

Its function is as follows. Acts as a ribosome collision sensor. Detects stalled/collided disomes (pairs of ribosomes where the leading ribosome is stalled and a second ribosome has collided with it) and endonucleolytically cleaves mRNA at the 5' boundary of the stalled ribosome. Stalled/collided disomes form a new interface (primarily via the 30S subunits) that binds SmrB. Cleaved mRNA becomes available for tmRNA ligation, leading to ribosomal subunit dissociation and rescue of stalled ribosomes. This chain is Ribosome rescue factor SmrB, found in Shewanella sp. (strain W3-18-1).